The sequence spans 130 residues: Small ribosomal subunit protein uS8 (130 aa).

It belongs to the universal ribosomal protein uS8 family. As to quaternary structure, part of the 30S ribosomal subunit. Contacts proteins S5 and S12.

One of the primary rRNA binding proteins, it binds directly to 16S rRNA central domain where it helps coordinate assembly of the platform of the 30S subunit. The protein is Small ribosomal subunit protein uS8 of Shewanella halifaxensis (strain HAW-EB4).